A 451-amino-acid chain; its full sequence is Bifunctional protein GlmU (451 aa).

The pyrophosphorylase stretch occupies residues 1 to 226; sequence MVAVAILAAG…YLEISGINDR (226 aa). UDP-N-acetyl-alpha-D-glucosamine is bound by residues 7 to 10, lysine 21, glutamine 73, and 78 to 79; these read LAAG and GT. Aspartate 103 is a Mg(2+) binding site. Residues glycine 140, glutamate 155, asparagine 170, and asparagine 224 each coordinate UDP-N-acetyl-alpha-D-glucosamine. Residue asparagine 224 coordinates Mg(2+). The linker stretch occupies residues 227 to 247; that stretch reads KQLATAYDILQNRIKDYWMRA. Residues 248–451 are N-acetyltransferase; sequence GVTLIDPDSI…ISGWRMKTDD (204 aa). UDP-N-acetyl-alpha-D-glucosamine-binding residues include arginine 329 and lysine 347. Histidine 359 (proton acceptor) is an active-site residue. UDP-N-acetyl-alpha-D-glucosamine-binding residues include tyrosine 362 and asparagine 373. Acetyl-CoA contacts are provided by residues alanine 376, 382-383, alanine 419, and arginine 436; that span reads NY.

The protein in the N-terminal section; belongs to the N-acetylglucosamine-1-phosphate uridyltransferase family. In the C-terminal section; belongs to the transferase hexapeptide repeat family. In terms of assembly, homotrimer. Requires Mg(2+) as cofactor.

The protein localises to the cytoplasm. It carries out the reaction alpha-D-glucosamine 1-phosphate + acetyl-CoA = N-acetyl-alpha-D-glucosamine 1-phosphate + CoA + H(+). It catalyses the reaction N-acetyl-alpha-D-glucosamine 1-phosphate + UTP + H(+) = UDP-N-acetyl-alpha-D-glucosamine + diphosphate. Its pathway is nucleotide-sugar biosynthesis; UDP-N-acetyl-alpha-D-glucosamine biosynthesis; N-acetyl-alpha-D-glucosamine 1-phosphate from alpha-D-glucosamine 6-phosphate (route II): step 2/2. The protein operates within nucleotide-sugar biosynthesis; UDP-N-acetyl-alpha-D-glucosamine biosynthesis; UDP-N-acetyl-alpha-D-glucosamine from N-acetyl-alpha-D-glucosamine 1-phosphate: step 1/1. It participates in bacterial outer membrane biogenesis; LPS lipid A biosynthesis. In terms of biological role, catalyzes the last two sequential reactions in the de novo biosynthetic pathway for UDP-N-acetylglucosamine (UDP-GlcNAc). The C-terminal domain catalyzes the transfer of acetyl group from acetyl coenzyme A to glucosamine-1-phosphate (GlcN-1-P) to produce N-acetylglucosamine-1-phosphate (GlcNAc-1-P), which is converted into UDP-GlcNAc by the transfer of uridine 5-monophosphate (from uridine 5-triphosphate), a reaction catalyzed by the N-terminal domain. This Gloeothece citriformis (strain PCC 7424) (Cyanothece sp. (strain PCC 7424)) protein is Bifunctional protein GlmU.